Reading from the N-terminus, the 81-residue chain is Relaxin-like protein AGF (81 aa).

Disulfide bonds link Cys14/Cys66, Cys26/Cys79, and Cys65/Cys70. Residue Asn37 is glycosylated (N-linked (GlcNAc...) asparagine).

This sequence belongs to the insulin family. Heterodimer of a B chain and an A chain linked by two disulfide bonds.

It is found in the secreted. In terms of biological role, uncertain. The chain is Relaxin-like protein AGF from Hypanus sabinus (Atlantic stingray).